An 83-amino-acid polypeptide reads, in one-letter code: Mu-theraphotoxin-Hhn2m (83 aa).

Residues 1–21 (MKASMFLALAGLVLLFVVGYA) form the signal peptide. Residues 22–48 (SESEEKEFPIELLSKIFAVDVFKGEER) constitute a propeptide that is removed on maturation. Disulfide bonds link Cys-50–Cys-65, Cys-57–Cys-70, and Cys-64–Cys-77. Leu-81 is modified (leucine amide).

This sequence belongs to the neurotoxin 10 (Hwtx-1) family. 15 (Hntx-3) subfamily. Monomer. Expressed by the venom gland.

The protein resides in the secreted. In terms of biological role, lethal neurotoxin. Selectively blocks tetrodotoxin-sensitive voltage-gated sodium channels (Nav). Does not affect tetrodotoxin-resistant voltage-gated sodium channels or calcium channels. The chain is Mu-theraphotoxin-Hhn2m from Cyriopagopus hainanus (Chinese bird spider).